Consider the following 510-residue polypeptide: Adenosine deaminase 2 (510 aa).

An N-terminal signal peptide occupies residues 1–24 (MSGWPVLPALLLAVAMSSFHSATS). The dimerization stretch occupies residues 25–95 (RDEERNRLLM…GLMEKSAVFN (71 aa)). 2 residues coordinate Zn(2+): His-107 and His-109. Residue Asp-110 participates in substrate binding. Asn-122 carries N-linked (GlcNAc...) asparagine glycosylation. Residues 122–182 (NATYRPYCYF…TEFDNSLLRT (61 aa)) form a PRB domain region. A disulfide bridge connects residues Cys-132 and Cys-156. A glycan (N-linked (GlcNAc...) asparagine) is linked at Asn-171. Substrate contacts are provided by residues 201-208 (WKKFKTIF), His-290, and Gly-323. His-353 contacts Zn(2+). The active-site Proton donor is the Glu-356. N-linked (GlcNAc...) asparagine glycosylation is present at Asn-375. His-381 functions as the Proton acceptor in the catalytic mechanism. Asp-438 is a binding site for Zn(2+). Residue Asp-439 coordinates substrate.

The protein belongs to the metallo-dependent hydrolases superfamily. Adenosine and AMP deaminases family. ADGF subfamily. As to quaternary structure, homodimer. Interacts with adenosine receptors. Binds heparin. Zn(2+) serves as cofactor.

The protein localises to the secreted. It carries out the reaction adenosine + H2O + H(+) = inosine + NH4(+). Functionally, adenosine deaminase that may contribute to the degradation of extracellular adenosine, a signaling molecule that controls a variety of cellular responses. Requires elevated adenosine levels for optimal enzyme activity. Binds to cell surfaces via proteoglycans and may play a role in the regulation of cell proliferation and differentiation, independently of its enzyme activity. The protein is Adenosine deaminase 2 of Sus scrofa (Pig).